A 452-amino-acid chain; its full sequence is 5'-nucleotidase domain-containing protein 1 (452 aa).

The Nucleophile role is filled by Asp-16. Asp-16 and Asp-18 together coordinate Mg(2+). Asp-18 functions as the Proton donor in the catalytic mechanism. Lys-171 is subject to N6-acetyllysine. Residue Asp-313 coordinates Mg(2+). The span at 339–361 (GDKDGKPEESEPEEKKGKYEGSK) shows a compositional bias: basic and acidic residues. Residues 339–365 (GDKDGKPEESEPEEKKGKYEGSKAKPL) form a disordered region.

This sequence belongs to the 5'(3')-deoxyribonucleotidase family.

The polypeptide is 5'-nucleotidase domain-containing protein 1 (NT5DC1) (Bos taurus (Bovine)).